Consider the following 179-residue polypeptide: Diphosphoinositol polyphosphate phosphohydrolase 2 (179 aa).

Substrate contacts are provided by residues arginine 9, 17–19, and 38–40; these read KKR and SSR. The region spanning 17-143 is the Nudix hydrolase domain; the sequence is KKRAACLCFR…VHAEYLEKLK (127 aa). Positions 49 and 65 each coordinate Mg(2+). The short motif at 50–71 is the Nudix box element; that stretch reads GGMEPEEEPGGAAVREVYEEAG. Glutamate 68 functions as the Proton acceptor in the catalytic mechanism. Glutamate 69 is a Mg(2+) binding site. Substrate contacts are provided by residues 88 to 90, arginine 114, and lysine 132; that span reads RKH.

This sequence belongs to the Nudix hydrolase family. DIPP subfamily. It depends on Mg(2+) as a cofactor. Mn(2+) is required as a cofactor.

It localises to the cytoplasm. It carries out the reaction diphospho-myo-inositol polyphosphate + H2O = myo-inositol polyphosphate + phosphate.. The enzyme catalyses 5-diphospho-1D-myo-inositol 1,2,3,4,6-pentakisphosphate + H2O = 1D-myo-inositol hexakisphosphate + phosphate + H(+). It catalyses the reaction 3,5-bis(diphospho)-1D-myo-inositol 1,2,4,6-tetrakisphosphate + H2O = 3-diphospho-1D-myo-inositol 1,2,4,5,6-pentakisphosphate + phosphate + 2 H(+). The catalysed reaction is 5-diphospho-1D-myo-inositol 1,3,4,6-tetrakisphosphate + H2O = 1D-myo-inositol 1,3,4,5,6-pentakisphosphate + phosphate + H(+). It carries out the reaction P(1),P(6)-bis(5'-adenosyl) hexaphosphate + H2O = 2 ATP + 2 H(+). The enzyme catalyses P(1),P(5)-bis(5'-adenosyl) pentaphosphate + H2O = ADP + ATP + 2 H(+). It catalyses the reaction 5-phospho-alpha-D-ribose 1-diphosphate + H2O = alpha-D-ribose 1,5-bisphosphate + phosphate + H(+). In terms of biological role, cleaves the beta-phosphate from diphosphoinositol polyphosphates such as PP-InsP5 (diphosphoinositol pentakisphosphate), PP-InsP4 (diphosphoinositol tetrakisphosphate) and [PP]2-InsP4 (bisdiphosphoinositol tetrakisphosphate), suggesting that it may play a role in signal transduction. Diadenosine polyphosphates, particularly Ap6A (P(1),P(6)-bis(5a-adenosyl) hexaphosphate) and Ap5A (P(1),P(5)-bis(5'-adenosyl) pentaphosphate) are downstream effectors of a signaling cascade that regulates cardiac KATP channels, can also be substrates, although with lower preference than the diphosphoinositol polyphosphates. Can also catalyze the hydrolysis of 5-phosphoribose 1-diphosphate, generating the glycolytic activator ribose 1,5-bisphosphate. Does not play a role in U8 snoRNA decapping activity. Binds U8 snoRNA. The sequence is that of Diphosphoinositol polyphosphate phosphohydrolase 2 from Mus musculus (Mouse).